The following is a 739-amino-acid chain: Catalase-peroxidase 2 (739 aa).

The N-terminal stretch at 1 to 26 is a signal peptide; sequence MKKSTIPTLSALTLAMSLAFGGSVIA. The segment at residues 105 to 227 is a cross-link (tryptophyl-tyrosyl-methioninium (Trp-Tyr) (with M-253)); the sequence is WHSAGVYRIF…MGATQMGLIY (123 aa). The active-site Proton acceptor is the His-106. Positions 227 to 253 form a cross-link, tryptophyl-tyrosyl-methioninium (Tyr-Met) (with W-105); that stretch reads YVNPEGPNGVPDPLASAKEIRDTFGRM. Position 268 (His-268) interacts with heme b.

Belongs to the peroxidase family. Peroxidase/catalase subfamily. In terms of assembly, homodimer or homotetramer. Requires heme b as cofactor. Post-translationally, formation of the three residue Trp-Tyr-Met cross-link is important for the catalase, but not the peroxidase activity of the enzyme.

It carries out the reaction H2O2 + AH2 = A + 2 H2O. It catalyses the reaction 2 H2O2 = O2 + 2 H2O. Its function is as follows. Bifunctional enzyme with both catalase and broad-spectrum peroxidase activity. The polypeptide is Catalase-peroxidase 2 (Shewanella sp. (strain MR-7)).